Consider the following 254-residue polypeptide: Adenosylcobinamide-GDP ribazoletransferase (254 aa).

The next 6 helical transmembrane spans lie at 36 to 56 (YYPLVGLILGGALWLALTLLL), 61 to 81 (PLVTAALLLALELILTGGIHL), 114 to 134 (ALSAMVYLLLKFSLLAGLLAL), 138 to 158 (LVPYLVLFMPILSRWIFLIGV), 197 to 217 (WVLQWPGIAGFILATLFILLF), and 232 to 252 (LYGASIELSELLFLLGAFPLL).

It belongs to the CobS family. Mg(2+) is required as a cofactor.

It is found in the cell membrane. It catalyses the reaction alpha-ribazole + adenosylcob(III)inamide-GDP = adenosylcob(III)alamin + GMP + H(+). The enzyme catalyses alpha-ribazole 5'-phosphate + adenosylcob(III)inamide-GDP = adenosylcob(III)alamin 5'-phosphate + GMP + H(+). It participates in cofactor biosynthesis; adenosylcobalamin biosynthesis; adenosylcobalamin from cob(II)yrinate a,c-diamide: step 7/7. In terms of biological role, joins adenosylcobinamide-GDP and alpha-ribazole to generate adenosylcobalamin (Ado-cobalamin). Also synthesizes adenosylcobalamin 5'-phosphate from adenosylcobinamide-GDP and alpha-ribazole 5'-phosphate. The chain is Adenosylcobinamide-GDP ribazoletransferase from Desulfitobacterium hafniense (strain Y51).